A 326-amino-acid polypeptide reads, in one-letter code: Lipid droplet-associated hydrolase (326 aa).

S140 functions as the Nucleophile in the catalytic mechanism. Residues D272 and H301 each act as charge relay system in the active site.

This sequence belongs to the AB hydrolase superfamily. LDAH family. Expressed in liver, adrenal gland, prostate, spleen, kidney, brown and white adipose tissue, testis and to a lesser extent in brain (at protein level). Expressed in peritoneal macrophages and bone marrow-derived macrophages (at protein level). Highly expressed in macrophage and foam cell-rich areas in atherosclerotic lesions (at protein level). mRNA, but no protein, expressed in heart and muscle.

It is found in the lipid droplet. The protein localises to the endoplasmic reticulum. The enzyme catalyses a cholesterol ester + H2O = cholesterol + a fatty acid + H(+). Its function is as follows. Probable serine lipid hydrolase associated with lipid droplets. Has low cholesterol esterase activity. Appears to lack triglyceride lipase activity. Involved in cholesterol and triglyceride homeostasis; stimulates cellular triglyceride accumulation and cellular cholesterol release. Acts antagonistically with PNPLA2/ATGL in regulation of cellular lipid stores. May regulate triglyceride accumulation indirectly through stimulation of PNPLA2/ATGL ubiquitination and proteasomal degradation. Promotes microtubule-dependent lipid droplet fusion. Highly expressed in macrophage-rich areas in atherosclerotic lesions, suggesting that it could promote cholesterol ester turnover in macrophages. Functionally, stimulates cellular triglyceride accumulation and lipid droplet fusion. In terms of biological role, associates with lipid droplets but does not stimulate cellular triglyceride accumulation, lipid droplet fusion or ATGL proteasomal degradation. The protein is Lipid droplet-associated hydrolase of Mus musculus (Mouse).